The primary structure comprises 503 residues: Probable cytosol aminopeptidase (503 aa).

Mn(2+) contacts are provided by Lys270 and Asp275. The active site involves Lys282. Mn(2+)-binding residues include Asp293, Asp352, and Glu354. Arg356 is an active-site residue.

It belongs to the peptidase M17 family. Requires Mn(2+) as cofactor.

It localises to the cytoplasm. The enzyme catalyses Release of an N-terminal amino acid, Xaa-|-Yaa-, in which Xaa is preferably Leu, but may be other amino acids including Pro although not Arg or Lys, and Yaa may be Pro. Amino acid amides and methyl esters are also readily hydrolyzed, but rates on arylamides are exceedingly low.. It carries out the reaction Release of an N-terminal amino acid, preferentially leucine, but not glutamic or aspartic acids.. In terms of biological role, presumably involved in the processing and regular turnover of intracellular proteins. Catalyzes the removal of unsubstituted N-terminal amino acids from various peptides. The polypeptide is Probable cytosol aminopeptidase (Salmonella agona (strain SL483)).